Reading from the N-terminus, the 290-residue chain is 33 kDa chaperonin (290 aa).

2 disulfide bridges follow: Cys235/Cys237 and Cys268/Cys271.

It belongs to the HSP33 family. Under oxidizing conditions two disulfide bonds are formed involving the reactive cysteines. Under reducing conditions zinc is bound to the reactive cysteines and the protein is inactive.

The protein resides in the cytoplasm. Its function is as follows. Redox regulated molecular chaperone. Protects both thermally unfolding and oxidatively damaged proteins from irreversible aggregation. Plays an important role in the bacterial defense system toward oxidative stress. The sequence is that of 33 kDa chaperonin from Streptococcus equi subsp. equi (strain 4047).